We begin with the raw amino-acid sequence, 384 residues long: D-galactosamine-6-phosphate deaminase AgaS (384 aa).

SIS domains follow at residues 45–197 and 215–364; these read LEPL…SQTF and SEGV…PDTP.

It belongs to the SIS family. AgaS subfamily.

It catalyses the reaction D-galactosamine 6-phosphate + H2O = D-tagatopyranose 1-phosphate + NH4(+). Its function is as follows. Catalyzes the isomerization-deamination of galactosamine 6-phosphate to form tagatofuranose 6-phosphate and ammonium ion. The chain is D-galactosamine-6-phosphate deaminase AgaS from Escherichia coli.